Here is a 159-residue protein sequence, read N- to C-terminus: Antitoxin Xre (159 aa).

Belongs to the MbcA/ParS/Xre antitoxin family. As to quaternary structure, homodimer. Forms a complex with cognate toxin Res; the 2 toxin molecules dimerize and each contacts an Xre homodimer. Most Res-Xre contacts are between the antitoxin molecule closest to the toxin.

In terms of biological role, probable antitoxin component of a type II toxin-antitoxin (TA) system. In vivo probably neutralizes the toxic effect of cognate toxin Res. This is Antitoxin Xre from Pseudomonas putida (strain ATCC 47054 / DSM 6125 / CFBP 8728 / NCIMB 11950 / KT2440).